Here is a 221-residue protein sequence, read N- to C-terminus: MKDNQEQAAPIVYWRIDEWFPDLSPDLRTRLKTYHEELLKFNRTLNLISAKTVFVADALHFADSIMASQAIMKSNPSLDKIYDLGSGNGFPGMIFALLYPKVQVVLVEFDQKKCEFLNHVAGVLKLSNVTVENRTIESFPDGSMKYVMARGLANISKSIMMTRKVVPKGGVFYHLKSEEWGIEVGDIPTQLCSVWAPSLVGEYKLPIGAIKFSVVKTDKIA.

S-adenosyl-L-methionine-binding positions include Gly-85, Phe-90, 136–137 (IE), and Arg-150.

The protein belongs to the methyltransferase superfamily. RNA methyltransferase RsmG family.

It localises to the cytoplasm. It carries out the reaction guanosine(527) in 16S rRNA + S-adenosyl-L-methionine = N(7)-methylguanosine(527) in 16S rRNA + S-adenosyl-L-homocysteine. In terms of biological role, specifically methylates the N7 position of guanine in position 527 of 16S rRNA. The chain is Ribosomal RNA small subunit methyltransferase G 3 from Bdellovibrio bacteriovorus (strain ATCC 15356 / DSM 50701 / NCIMB 9529 / HD100).